The chain runs to 402 residues: Multidrug resistance protein MdtH (402 aa).

A run of 11 helical transmembrane segments spans residues 13–33 (YFLL…FPLI), 34–54 (SIRF…ALGL), 99–116 (PWVL…GTLF), 139–159 (LLMM…SWLL), 165–185 (LVCS…AWYL), 214–234 (VLTL…LPIM), 243–263 (AAVK…LYPI), 277–297 (LMAG…TSSL), 300–320 (LFTL…ARET), 340–360 (LGLA…FDAG), and 368–388 (LPWL…WWQF).

This sequence belongs to the major facilitator superfamily. DHA1 family. MdtH (TC 2.A.1.2.21) subfamily.

The protein resides in the cell inner membrane. The polypeptide is Multidrug resistance protein MdtH (Klebsiella pneumoniae (strain 342)).